The primary structure comprises 188 residues: Probable DNA-directed RNA polymerase subunit delta (188 aa).

An HTH HARE-type domain is found at Leu-14–Trp-83. A disordered region spans residues Gly-117–Glu-188.

This sequence belongs to the RpoE family. RNAP is composed of a core of 2 alpha, a beta and a beta' subunits. The core is associated with a delta subunit and one of several sigma factors.

Functionally, participates in both the initiation and recycling phases of transcription. In the presence of the delta subunit, RNAP displays an increased specificity of transcription, a decreased affinity for nucleic acids, and an increased efficiency of RNA synthesis because of enhanced recycling. In Streptococcus uberis (strain ATCC BAA-854 / 0140J), this protein is Probable DNA-directed RNA polymerase subunit delta.